A 345-amino-acid polypeptide reads, in one-letter code: Uroporphyrinogen decarboxylase (345 aa).

Residues Arg24–Arg28, Asp74, Tyr150, Ser205, and His318 contribute to the substrate site.

It belongs to the uroporphyrinogen decarboxylase family. Homodimer.

Its subcellular location is the cytoplasm. The catalysed reaction is uroporphyrinogen III + 4 H(+) = coproporphyrinogen III + 4 CO2. It participates in porphyrin-containing compound metabolism; protoporphyrin-IX biosynthesis; coproporphyrinogen-III from 5-aminolevulinate: step 4/4. In terms of biological role, catalyzes the decarboxylation of four acetate groups of uroporphyrinogen-III to yield coproporphyrinogen-III. This is Uroporphyrinogen decarboxylase from Dichelobacter nodosus (strain VCS1703A).